The sequence spans 642 residues: Fimbrin (642 aa).

EF-hand domains lie at 16–50 (EDLF…KDGD) and 51–86 (ATYD…LRES). 7 residues coordinate Ca(2+): Asp-29, Asp-31, Trp-35, Asp-66, Ser-68, Arg-70, and Asp-75. Actin-binding stretches follow at residues 125–394 (IVAG…GLEP) and 395–642 (IQEE…TLNK). Calponin-homology (CH) domains follow at residues 139–259 (EEER…RRGL), 287–390 (LPPE…NTHP), 411–521 (EREA…RRNI), and 534–642 (DMSD…TLNK).

In terms of biological role, binds to actin, and functionally associates with actin structures involved in the development and maintenance of cell polarity. The chain is Fimbrin (SAC6) from Saccharomyces cerevisiae (strain ATCC 204508 / S288c) (Baker's yeast).